Reading from the N-terminus, the 573-residue chain is ESX-1 secretion system protein EccA1 (573 aa).

Residue G334–T341 coordinates ATP.

This sequence belongs to the CbxX/CfxQ family. In terms of assembly, part of the ESX-1 / type VII secretion system (T7SS), which is composed of cytosolic and membrane components.

Its subcellular location is the cytoplasm. In terms of biological role, part of the ESX-1 specialized secretion system, which delivers several virulence factors to host cells during infection, including the key virulence factors EsxA (ESAT-6) and EsxB (CFP-10). EccA1 exhibits ATPase activity and may provide energy for the export of ESX-1 substrates. In Mycobacterium tuberculosis (strain CDC 1551 / Oshkosh), this protein is ESX-1 secretion system protein EccA1.